The chain runs to 223 residues: DNA replication complex GINS protein SLD5 (223 aa).

M1 is modified (N-acetylmethionine). N-acetylthreonine; in DNA replication complex GINS protein SLD5, N-terminally processed is present on T2. Residues S12 and S16 each carry the phosphoserine modification. Positions 166–223 (DLDSYVFLRVKERQENILVEPEADEQRDYVIDLEVGSQHLIRYKTIAPLVASGAVQLI) are important for GINS complex assembly.

The protein belongs to the GINS4/SLD5 family. In terms of assembly, component of the CMG helicase complex, a hexameric ring of related MCM2-7 subunits stabilized by CDC45 and the tetrameric GINS complex. Associated with ORC2. Interacts with HELB. As to expression, highly abundant in testis. Weakly expressed in thymus and bone marrow.

It is found in the nucleus. It localises to the chromosome. The protein localises to the cytoplasm. Functionally, required for initiation of chromosomal DNA replication. Core component of CDC45-MCM-GINS (CMG) helicase, the molecular machine that unwinds template DNA during replication, and around which the replisome is built. The polypeptide is DNA replication complex GINS protein SLD5 (Gins4) (Mus musculus (Mouse)).